Reading from the N-terminus, the 471-residue chain is MANSFATRTFTTLSDLQPNMANLKVIGVVIGKTDVKGFPDRKNIGSERYTFSFTIRDSPAHFVNAASWGNEDYIKSLSDSFRVGDCVIIENPLIQRKEIEREEKFSPATPSNCKLLLSENHSTVKVCSSYEVDTKLLSLIHLPVKESHDYYSLGDIVANGHSLNGRIINVLAAVKSVGEPKYFTTSDRRKGQRCEVRLYDETEFSFAMTCWDNESILLAQSWMPRETVIFVSDVRISFDKFRNCMTATVISKTIITTNPETPEANILLNFIRENKETNVLDDEIESYFKESINLSTIVDVYTVEQLKGKALKNEGKADPSYGILYAYISTLNIDDETTKVVRNRCSTCGYIVNEASNMCTICNKNSLDFKSVFLSFDMLIDLTDHTGTLHSCSLTGSVAEETLGCTVNEFLAMTDEQKTALKWQFLLERSKIYLKFVVSHRARSGLKISVLSCKLADPTEASRNLSGQTRV.

Residues 167–272 constitute a DNA-binding region (OB); sequence IINVLAAVKS…EANILLNFIR (106 aa).

The protein belongs to the MEIOB family. As to quaternary structure, component of a multiprotein complex with RPA2 and SPATA22. Interacts with SPATA22. Interacts with the complex BRME1:HSF2BP:BRCA2.

The protein resides in the cytoplasm. It localises to the nucleus. Its subcellular location is the chromosome. Single-stranded DNA-binding protein required for homologous recombination in meiosis I. Required for double strand breaks (DSBs) repair and crossover formation and promotion of faithful and complete synapsis. Not required for the initial loading of recombinases but required to maintain a proper number of RAD51 and DMC1 foci after the zygotene stage. May act by ensuring the stabilization of recombinases, which is required for successful homology search and meiotic recombination. Displays Single-stranded DNA 3'-5' exonuclease activity in vitro. The protein is Meiosis-specific with OB domain-containing protein (MEIOB) of Macaca fascicularis (Crab-eating macaque).